Reading from the N-terminus, the 313-residue chain is Inner membrane ABC transporter permease protein YdcU (313 aa).

Residues 1 to 25 lie on the Cytoplasmic side of the membrane; sequence MAMNVLQSPSRPGLGKVSGFFWHNP. Residues 26–46 form a helical membrane-spanning segment; it reads GLGLFLLLLGPLMWFGIVYFG. Over 47–92 the chain is Periplasmic; sequence SLLTLLWQGFYTFDDFTMSVTPELTLANIRALFNPANYDIILRTLT. Residues 87–302 enclose the ABC transmembrane type-1 domain; it reads ILRTLTMAVA…PIILIALYLA (216 aa). Residues 93-113 form a helical membrane-spanning segment; it reads MAVAVTIASAILAFPMAWYMA. Residues 114-122 are Cytoplasmic-facing; sequence RYTSGKMKA. A helical transmembrane segment spans residues 123–143; sequence FFYIAVMLPMWASYIVKAYAW. The Periplasmic portion of the chain corresponds to 144-154; that stretch reads TLLLAKDGVAQ. A helical transmembrane segment spans residues 155-175; that stretch reads WFLQHLGLEPLLTAFLTLPAV. Over 176–187 the chain is Cytoplasmic; sequence GGNTLSTSGLGR. Residues 188–208 traverse the membrane as a helical segment; the sequence is FLVFLYIWLPFMILPVQAALE. Residues 209–230 lie on the Periplasmic side of the membrane; that stretch reads RLPPSLLQASADLGARPRQTFR. Residues 231–251 form a helical membrane-spanning segment; it reads YVVLPLAIPGIAAGSIFTFSL. Threonine 252 is a topological domain (cytoplasmic). A helical membrane pass occupies residues 253-273; it reads LGDFIVPQLVGPPGYFIGNMV. At 274–283 the chain is on the periplasmic side; the sequence is YSQQGAIGNM. The chain crosses the membrane as a helical span at residues 284 to 304; it reads PMAAAFTLVPIILIALYLAFV. At 305–313 the chain is on the cytoplasmic side; the sequence is KRLGAFDAL.

The protein belongs to the binding-protein-dependent transport system permease family. CysTW subfamily.

The protein localises to the cell inner membrane. Its function is as follows. Probably part of the ABC transporter complex YdcSTUV. Probably responsible for the translocation of the substrate across the membrane. This chain is Inner membrane ABC transporter permease protein YdcU (ydcU), found in Escherichia coli (strain K12).